The sequence spans 127 residues: Photosystem II extrinsic protein U (127 aa).

Positions 1 to 31 (MSRLFRRLSTLLLCSLLVLGVWLTQPLSVQA) are cleaved as a signal peptide.

The protein belongs to the PsbU family. In terms of assembly, PSII is composed of 1 copy each of membrane proteins PsbA, PsbB, PsbC, PsbD, PsbE, PsbF, PsbH, PsbI, PsbJ, PsbK, PsbL, PsbM, PsbT, PsbX, PsbY, PsbZ, Psb30/Ycf12, peripheral proteins PsbO, CyanoQ (PsbQ), PsbU, PsbV and a large number of cofactors. It forms dimeric complexes.

The protein localises to the cellular thylakoid membrane. In terms of biological role, one of the extrinsic, lumenal subunits of photosystem II (PSII). PSII is a light-driven water plastoquinone oxidoreductase, using light energy to abstract electrons from H(2)O, generating a proton gradient subsequently used for ATP formation. The extrinsic proteins stabilize the structure of photosystem II oxygen-evolving complex (OEC), the ion environment of oxygen evolution and protect the OEC against heat-induced inactivation. In Synechococcus sp. (strain RCC307), this protein is Photosystem II extrinsic protein U.